The chain runs to 207 residues: Peptidyl-tRNA hydrolase (207 aa).

Y14 serves as a coordination point for tRNA. H19 serves as the catalytic Proton acceptor. Residues F68, N70, and N116 each contribute to the tRNA site.

The protein belongs to the PTH family. Monomer.

It localises to the cytoplasm. It catalyses the reaction an N-acyl-L-alpha-aminoacyl-tRNA + H2O = an N-acyl-L-amino acid + a tRNA + H(+). Functionally, hydrolyzes ribosome-free peptidyl-tRNAs (with 1 or more amino acids incorporated), which drop off the ribosome during protein synthesis, or as a result of ribosome stalling. In terms of biological role, catalyzes the release of premature peptidyl moieties from peptidyl-tRNA molecules trapped in stalled 50S ribosomal subunits, and thus maintains levels of free tRNAs and 50S ribosomes. In Hyphomonas neptunium (strain ATCC 15444), this protein is Peptidyl-tRNA hydrolase.